The sequence spans 347 residues: Phosphoribosylformylglycinamidine cyclo-ligase (347 aa).

This sequence belongs to the AIR synthase family.

It is found in the cytoplasm. The catalysed reaction is 2-formamido-N(1)-(5-O-phospho-beta-D-ribosyl)acetamidine + ATP = 5-amino-1-(5-phospho-beta-D-ribosyl)imidazole + ADP + phosphate + H(+). Its pathway is purine metabolism; IMP biosynthesis via de novo pathway; 5-amino-1-(5-phospho-D-ribosyl)imidazole from N(2)-formyl-N(1)-(5-phospho-D-ribosyl)glycinamide: step 2/2. This chain is Phosphoribosylformylglycinamidine cyclo-ligase, found in Syntrophus aciditrophicus (strain SB).